The chain runs to 413 residues: Serine hydroxymethyltransferase (413 aa).

Residues leucine 115 and 119 to 121 (GHL) each bind (6S)-5,6,7,8-tetrahydrofolate. Lysine 224 is modified (N6-(pyridoxal phosphate)lysine).

Belongs to the SHMT family. Homodimer. It depends on pyridoxal 5'-phosphate as a cofactor.

Its subcellular location is the cytoplasm. The catalysed reaction is (6R)-5,10-methylene-5,6,7,8-tetrahydrofolate + glycine + H2O = (6S)-5,6,7,8-tetrahydrofolate + L-serine. The protein operates within one-carbon metabolism; tetrahydrofolate interconversion. It participates in amino-acid biosynthesis; glycine biosynthesis; glycine from L-serine: step 1/1. Functionally, catalyzes the reversible interconversion of serine and glycine with tetrahydrofolate (THF) serving as the one-carbon carrier. This reaction serves as the major source of one-carbon groups required for the biosynthesis of purines, thymidylate, methionine, and other important biomolecules. Also exhibits THF-independent aldolase activity toward beta-hydroxyamino acids, producing glycine and aldehydes, via a retro-aldol mechanism. This chain is Serine hydroxymethyltransferase, found in Mycoplasma mycoides subsp. mycoides SC (strain CCUG 32753 / NCTC 10114 / PG1).